We begin with the raw amino-acid sequence, 139 residues long: ATP synthase epsilon chain (139 aa).

It belongs to the ATPase epsilon chain family. In terms of assembly, F-type ATPases have 2 components, CF(1) - the catalytic core - and CF(0) - the membrane proton channel. CF(1) has five subunits: alpha(3), beta(3), gamma(1), delta(1), epsilon(1). CF(0) has three main subunits: a, b and c.

It is found in the cell inner membrane. In terms of biological role, produces ATP from ADP in the presence of a proton gradient across the membrane. This Haemophilus ducreyi (strain 35000HP / ATCC 700724) protein is ATP synthase epsilon chain.